The following is a 797-amino-acid chain: Adhesion G-protein coupled receptor G7 (797 aa).

The N-terminal stretch at M1–G26 is a signal peptide. At L27 to S438 the chain is on the extracellular side. N82, N159, N178, N191, N247, N261, N312, N316, and N387 each carry an N-linked (GlcNAc...) asparagine glycan. A GAIN-B domain is found at F275 to Y428. 2 cysteine pairs are disulfide-bonded: C383–C410 and C398–C412. Positions C383–Y428 are GPS. N413 carries an N-linked (GlcNAc...) asparagine glycan. The helical transmembrane segment at N439–T459 threads the bilayer. Residues R460 to T468 lie on the Cytoplasmic side of the membrane. Residues W469–I489 traverse the membrane as a helical segment. At E490–A528 the chain is on the extracellular side. A helical membrane pass occupies residues I529–A549. Residues Q550–H565 are Cytoplasmic-facing. Residues F566–V586 traverse the membrane as a helical segment. The Extracellular portion of the chain corresponds to G587–P623. The chain crosses the membrane as a helical span at residues L624–I644. Topologically, residues T645–K669 are cytoplasmic. The chain crosses the membrane as a helical span at residues I670–M690. The Extracellular portion of the chain corresponds to L691 to R698. A helical transmembrane segment spans residues I699–L719. The Cytoplasmic segment spans residues Y720–I797.

This sequence belongs to the G-protein coupled receptor 2 family. Adhesion G-protein coupled receptor (ADGR) subfamily.

Its subcellular location is the membrane. Orphan receptor. In Homo sapiens (Human), this protein is Adhesion G-protein coupled receptor G7 (ADGRG7).